A 715-amino-acid polypeptide reads, in one-letter code: DNA ligase (715 aa).

Residues 47-51 (DADYD), 96-97 (SL), and E128 each bind NAD(+). The active-site N6-AMP-lysine intermediate is K130. Residues R151, E188, K306, and K330 each contribute to the NAD(+) site. Residues C435, C438, C453, and C459 each coordinate Zn(2+). The region spanning 637-715 (RRDTAVAGKT…EDEWLALIGN (79 aa)) is the BRCT domain.

Belongs to the NAD-dependent DNA ligase family. LigA subfamily. Requires Mg(2+) as cofactor. The cofactor is Mn(2+).

It catalyses the reaction NAD(+) + (deoxyribonucleotide)n-3'-hydroxyl + 5'-phospho-(deoxyribonucleotide)m = (deoxyribonucleotide)n+m + AMP + beta-nicotinamide D-nucleotide.. In terms of biological role, DNA ligase that catalyzes the formation of phosphodiester linkages between 5'-phosphoryl and 3'-hydroxyl groups in double-stranded DNA using NAD as a coenzyme and as the energy source for the reaction. It is essential for DNA replication and repair of damaged DNA. The protein is DNA ligase of Rhodopseudomonas palustris (strain TIE-1).